Here is a 962-residue protein sequence, read N- to C-terminus: MSNTTVEQFAAELKRPVEDLLKQLKEAGVSKNSGSDSLTLDDKQLLNAYLTKKNGSNGGTISIRRTKTEVSTVDGVKVETRKRGRTVNIPSAEELAAQVKAAQTQAAPVRPEQTAEDAAKARAEAAARAEARAKAEAEAAKLKAAKAGNKAKPAAQKPTEAKAETAPVAAETKPAEESKAEKAQADKMPSKKPAEPKEKAAKPKHERNGKGKDAKKPAKPAAPAVPQPVVSAEEQAQRDEEARRAAALRAHQEALLKEKQERQARREAMKQQAEQQAKAAQEAKTGRQRPAKPAEKPQAAAPALENKPVNPAKAKKENRRNRDDEGQGRNAKGKGGKGGRDRNNARNGDDERVRGGKKGKKLKLEPNQHAFQAPTEPVVHEVLVPETITVADLAHKMAVKGVEVVKALMKMGMMVTINQSIDQDTALIVVEELGHIGKPAAADDPEAFLDEGAEAVEAEALPRPPVVTVMGHVDHGKTSLLDYIRRTKVVQGEAGGITQHIGAYHVETPRGVITFLDTPGHEAFTAMRARGAKATDIVILVVAADDGVMPQTIEAIAHAKAAGVPMVVAVNKIDKEAANPERIRQELTAHEVVPDEWGGDVQFIDVSAKKGLNIDALLEAVLLEAEVLELTAPVDAPAKGIIVEARLDKGRGAVATLLVQSGTLKKGDMLLAGTAFGKIRAMVDENGKSITEASPSIPVEILGLSDVPNAGEDAMVLADEKKAREIALFRQGKYRDVRLAKQQAAKLENMFNNMGENQAQSLSVIIKADVQGSYEALAGSLKKLSTDEVKVNVLHSGVGGITESDVNLAIASGAFIIGFNVRADASSRKLAENENVEIRYYNIIYDAIDDVKAAMSGMLSPEEKEQVTGTVEIRQVISVSKVGNIAGCMVTDGVVKRDSHVRLIRNNVVIHTGELASLKRYKDDVKEVRMGFECGLMLKGYNEIMEGDQLECFDIVEVARTL.

Residues 99 to 365 form a disordered region; the sequence is VKAAQTQAAP…GKKGKKLKLE (267 aa). Over residues 117 to 141 the composition is skewed to basic and acidic residues; sequence DAAKARAEAAARAEARAKAEAEAAK. The span at 145-155 shows a compositional bias: low complexity; sequence AKAGNKAKPAA. Positions 173–216 are enriched in basic and acidic residues; sequence KPAEESKAEKAQADKMPSKKPAEPKEKAAKPKHERNGKGKDAKK. Residues 219–234 show a composition bias toward low complexity; that stretch reads KPAAPAVPQPVVSAEE. Positions 235–269 are enriched in basic and acidic residues; that stretch reads QAQRDEEARRAAALRAHQEALLKEKQERQARREAM. Residues 270–283 show a composition bias toward low complexity; the sequence is KQQAEQQAKAAQEA. Positions 338–354 are enriched in basic and acidic residues; it reads GGRDRNNARNGDDERVR. The tr-type G domain occupies 462–631; that stretch reads PRPPVVTVMG…LLEAEVLELT (170 aa). Residues 471-478 are G1; the sequence is GHVDHGKT. 471–478 contacts GTP; it reads GHVDHGKT. The segment at 496-500 is G2; it reads GITQH. A G3 region spans residues 517–520; sequence DTPG. GTP contacts are provided by residues 517–521 and 571–574; these read DTPGH and NKID. The G4 stretch occupies residues 571–574; sequence NKID. The interval 607 to 609 is G5; the sequence is SAK.

Belongs to the TRAFAC class translation factor GTPase superfamily. Classic translation factor GTPase family. IF-2 subfamily.

The protein localises to the cytoplasm. Its function is as follows. One of the essential components for the initiation of protein synthesis. Protects formylmethionyl-tRNA from spontaneous hydrolysis and promotes its binding to the 30S ribosomal subunits. Also involved in the hydrolysis of GTP during the formation of the 70S ribosomal complex. The polypeptide is Translation initiation factor IF-2 (Neisseria meningitidis serogroup C (strain 053442)).